Reading from the N-terminus, the 202-residue chain is uncharacterized protein (202 aa).

Lys136 participates in a covalent cross-link: Isoglutamyl lysine isopeptide (Lys-Gln) (interchain with Q-Cter in protein Pup).

This is an uncharacterized protein from Mycobacterium tuberculosis (strain CDC 1551 / Oshkosh).